Reading from the N-terminus, the 209-residue chain is Cytidylate kinase (209 aa).

7–15 contributes to the ATP binding site; the sequence is GPAASGKGT.

The protein belongs to the cytidylate kinase family. Type 1 subfamily.

Its subcellular location is the cytoplasm. The catalysed reaction is CMP + ATP = CDP + ADP. It carries out the reaction dCMP + ATP = dCDP + ADP. The polypeptide is Cytidylate kinase (Afipia carboxidovorans (strain ATCC 49405 / DSM 1227 / KCTC 32145 / OM5) (Oligotropha carboxidovorans)).